Reading from the N-terminus, the 523-residue chain is Acetyl-CoA hydrolase (523 aa).

277 to 281 lines the CoA pocket; that stretch reads GIGNI. The active-site 5-glutamyl coenzyme A thioester intermediate is E302. CoA contacts are provided by N392 and G396.

It belongs to the acetyl-CoA hydrolase/transferase family.

It localises to the cytoplasm. It catalyses the reaction acetyl-CoA + H2O = acetate + CoA + H(+). In terms of biological role, presumably involved in regulating the intracellular acetyl-CoA pool for fatty acid and cholesterol synthesis and fatty acid oxidation. The polypeptide is Acetyl-CoA hydrolase (ACH1) (Eremothecium gossypii (strain ATCC 10895 / CBS 109.51 / FGSC 9923 / NRRL Y-1056) (Yeast)).